A 180-amino-acid chain; its full sequence is Cytochrome b6-f complex iron-sulfur subunit (180 aa).

A helical membrane pass occupies residues 21-43 (LLTFGTITGTALGALYPVVKYFI). Positions 66–162 (VSEYLAKHLP…ATVTEDDKLV (97 aa)) constitute a Rieske domain. Cys-108, His-110, Cys-126, and His-129 together coordinate [2Fe-2S] cluster. Residues Cys-113 and Cys-128 are joined by a disulfide bond.

It belongs to the Rieske iron-sulfur protein family. As to quaternary structure, the 4 large subunits of the cytochrome b6-f complex are cytochrome b6, subunit IV (17 kDa polypeptide, PetD), cytochrome f and the Rieske protein, while the 4 small subunits are PetG, PetL, PetM and PetN. The complex functions as a dimer. The cofactor is [2Fe-2S] cluster.

It localises to the cellular thylakoid membrane. The catalysed reaction is 2 oxidized [plastocyanin] + a plastoquinol + 2 H(+)(in) = 2 reduced [plastocyanin] + a plastoquinone + 4 H(+)(out). Functionally, component of the cytochrome b6-f complex, which mediates electron transfer between photosystem II (PSII) and photosystem I (PSI), cyclic electron flow around PSI, and state transitions. The protein is Cytochrome b6-f complex iron-sulfur subunit of Thermosynechococcus vestitus (strain NIES-2133 / IAM M-273 / BP-1).